A 532-amino-acid chain; its full sequence is UDP-glucuronosyltransferase 1A6 (532 aa).

The signal sequence occupies residues 1–26 (MACLLRSFQRISAGVFFLALWGMVVG). 2 N-linked (GlcNAc...) asparagine glycosylation sites follow: N294 and N346. Residues 490-506 (VIGFLLAVVLTVAFITF) form a helical membrane-spanning segment.

This sequence belongs to the UDP-glycosyltransferase family. Isoform 1 interacts with isoform 3/i2 suggesting that oligomerization is involved in negative regulation of transferase activity by isoform 3. Isoform 1 also interacts with respective i2 isoforms of UGT1A1, UGT1A3, UGT1A4, UGT1A7, UGT1A8, UGT1A9 and UGT1A10. In terms of tissue distribution, expressed in skin. Isoforms 1 and 3 are expressed in kidney and liver. Isoform 1 but not isoform 2 is expressed in colon, esophagus and small intestine.

It is found in the microsome. Its subcellular location is the endoplasmic reticulum membrane. The catalysed reaction is glucuronate acceptor + UDP-alpha-D-glucuronate = acceptor beta-D-glucuronoside + UDP + H(+). It catalyses the reaction (5Z,8Z,11Z,14Z)-eicosatetraenoate + UDP-alpha-D-glucuronate = O-[(5Z),(8Z),(11Z),(14Z)-eicosatetraenoyl]-beta-D-glucuronate + UDP. It carries out the reaction 15-hydroxy-(5Z,8Z,11Z,13E)-eicosatetraenoate + UDP-alpha-D-glucuronate = 15-O-(beta-D-glucuronosyl)-(5Z,8Z,11Z,14Z)-eicosatetraenoate + UDP + H(+). The enzyme catalyses (E)-ferulate + UDP-alpha-D-glucuronate = (E)-4-O-(beta-D-glucuronosyl)-ferulate + UDP + H(+). The catalysed reaction is (E)-ferulate + UDP-alpha-D-glucuronate = (E)-ferulic acid beta-D-glucuronate ester + UDP. Its function is as follows. UDP-glucuronosyltransferase (UGT) that catalyzes phase II biotransformation reactions in which lipophilic substrates are conjugated with glucuronic acid to facilitate their inactivation and excretion from the body. Essential for the elimination and detoxification of drugs, xenobiotics and endogenous compounds. Involved in the glucuronidation of arachidonic acid (AA) and AA-derived eicosanoids including 15-HETE and 20-HETE. Conjugates small planar phenolic molecules such as 4-nitrophenol, 1-naphthol, and 4-methylumbelliferone. The bulky phenol 4-hydroxybiphenyl, androgens and estrogens are not substrates. 2-hydroxybiphenyl is an excellent substrate. Involved in the glucuronidation of the phytochemical ferulic acid at the phenolic or the carboxylic acid group. Isoform 3 lacks transferase activity but acts as a negative regulator of isoform 1. In Homo sapiens (Human), this protein is UDP-glucuronosyltransferase 1A6.